We begin with the raw amino-acid sequence, 741 residues long: Moderate conductance mechanosensitive channel YbiO (741 aa).

An N-terminal signal peptide occupies residues 1–18 (MRWILFILFCLLGAPAHA). The segment at 22–42 (PGVTTTTTTDSTTEPAPEPDI) is disordered. Over residues 25–34 (TTTTTTDSTT) the composition is skewed to low complexity. Transmembrane regions (helical) follow at residues 143-163 (MLAVLVFGFYWLIRLCALPLY), 185-205 (AMIIGAFIIDLLLLALTLFVG), 225-245 (LFLNAFALIEFFKAVLRLIFC), 268-288 (LSWLSSLIGYGLIVAVPIISN), 294-314 (IGALANVIIMLCMTVWALYLI), 343-363 (FALVWHWLASAYFIVLFFFSL), 372-392 (FMMGATVRSLAIIGIAAFVSG), 432-452 (ILTVCVAVMLLLSAWGLFDFW), 466-486 (ILIRIALILFFSAVGWTVLAS), 509-529 (LLTLFRNALAVIISTITIMIV), and 533-553 (IGVNIAPLLAGAGALGLAISF).

The protein belongs to the MscS (TC 1.A.23) family. Homoheptamer.

The protein localises to the cell inner membrane. In terms of biological role, mechanosensitive channel that protects cells against hypoosmotic stress when highly overexpressed. The protein is Moderate conductance mechanosensitive channel YbiO (ybiO) of Escherichia coli (strain K12).